The sequence spans 142 residues: Hemoglobin subunit alpha (142 aa).

Residues 2-142 form the Globin domain; it reads VLSDADKTHV…VATVLTSKYR (141 aa). S4 carries the post-translational modification Phosphoserine. K8 is subject to N6-succinyllysine. T9 is modified (phosphothreonine). At K12 the chain carries N6-succinyllysine. K17 is modified (N6-acetyllysine; alternate). K17 is modified (N6-succinyllysine; alternate). Y25 carries the post-translational modification Phosphotyrosine. S36 carries the phosphoserine modification. Position 41 is an N6-succinyllysine (K41). S50 carries the post-translational modification Phosphoserine. H59 serves as a coordination point for O2. H88 lines the heme b pocket. S103 carries the post-translational modification Phosphoserine. The residue at position 109 (T109) is a Phosphothreonine. Residues S125 and S132 each carry the phosphoserine modification. A phosphothreonine mark is found at T135 and T138. Residue S139 is modified to Phosphoserine.

This sequence belongs to the globin family. Heterotetramer of two alpha chains and two beta chains. As to expression, red blood cells.

Functionally, involved in oxygen transport from the lung to the various peripheral tissues. In terms of biological role, hemopressin acts as an antagonist peptide of the cannabinoid receptor CNR1. Hemopressin-binding efficiently blocks cannabinoid receptor CNR1 and subsequent signaling. This is Hemoglobin subunit alpha (HBA) from Dasyurus viverrinus (Eastern quoll).